The sequence spans 517 residues: Meiosis-specific transcription factor mei4 (517 aa).

A DNA-binding region (fork-head) is located at residues 81–172; sequence KPPCSYATLI…QNFVSVRLHR (92 aa). A disordered region spans residues 170-278; the sequence is LHRSHSTDSN…PNAETQEDLP (109 aa). Residues 209-223 are compositionally biased toward low complexity; that stretch reads NSFNSSTSTSGSSSN. Residues 230–246 are compositionally biased toward polar residues; sequence NDASQPSNQDSSLNSNI. Over residues 254–270 the composition is skewed to low complexity; sequence SNVQSNSSSSENVPKPN.

Its subcellular location is the nucleus. Its function is as follows. Functions as a meiosis-specific transcription factor. Binds to the 5'-GTAAAYA-3' consensus sequence of the promoter of the spo6 gene. In Schizosaccharomyces pombe (strain 972 / ATCC 24843) (Fission yeast), this protein is Meiosis-specific transcription factor mei4 (mei4).